The sequence spans 785 residues: Putative endonuclease MutS2 (785 aa).

335–342 provides a ligand contact to ATP; that stretch reads GPNTGGKT. Residues 513–586 adopt a coiled-coil conformation; that stretch reads TAEHNEVDTM…AEKVKAAMKE (74 aa). The tract at residues 636–785 is partially complements a deletion for mitomycin C (MMC) resistance and for chromosomal DNA transformation; it reads KRDFKPGDEV…GSGVTVVELK (150 aa). The segment at 641 to 681 is KOW region; the sequence is PGDEVKVLTFGQKGTLLEKTGGNEWNVQIGILKMKVKEKDL. The Smr domain occupies 710–785; the sequence is LDLRGERYEN…GSGVTVVELK (76 aa).

The protein belongs to the DNA mismatch repair MutS family. MutS2 subfamily. As to quaternary structure, binds to ribosomes as a homodimer. Binds to stalled/collided disomes, association is greater in (ribosome-targeted) antibiotic-treated cells (with increased stalling at specific mRNA sites). The clamp domain of one monomer binds the A-site finger, the 23S rRNA of the central protuberance and ribosomal protein uL5 of the leading (stalled) ribosome, while the other monomer binds in a gap between the ribosomal central protuberance and the L1 stalk of the leading ribosome.

It is found in the cytoplasm. Acts as a ribosome collision sensor splitting the ribosome into its 2 subunits. Detects stalled/collided disomes (pairs of ribosomes where the leading ribosome is stalled and a second ribosome has collided with it) which it binds and splits, by an ATP-hydrolysis driven conformational change. Does not seem to have endoribonuclease activity (in the context of ribosome stalling). Acts upstream of the ribosome quality control system (RQC), a ribosome-associated complex that mediates the extraction of incompletely synthesized nascent chains from stalled ribosomes and their subsequent degradation, probably generates substrates for RQC. Functionally, does not seem to be involved in mismatch repair or in the prevention of interspecific recombination during DNA transformation. Might be involved in homologous recombination. Putative endonuclease that may be involved in the suppression of homologous recombination and may therefore have a key role in the control of bacterial genetic diversity. The sequence is that of Putative endonuclease MutS2 from Bacillus subtilis (strain 168).